The following is a 162-amino-acid chain: Beta-carotene hydroxylase (162 aa).

In terms of domain architecture, Fatty acid hydroxylase spans 8-135; that stretch reads VATVLVMELT…GRDHCVSFGF (128 aa).

It belongs to the sterol desaturase family.

The enzyme catalyses all-trans-beta-carotene + 4 reduced [2Fe-2S]-[ferredoxin] + 2 O2 + 4 H(+) = all-trans-zeaxanthin + 4 oxidized [2Fe-2S]-[ferredoxin] + 2 H2O. The protein operates within carotenoid biosynthesis; astaxanthin biosynthesis. Functionally, catalyzes the hydroxylation reaction from beta-carotene to zeaxanthin via beta-cryptoxanthin. This Paracoccus sp. (strain PC1) (Alcaligenes sp. (strain PC1)) protein is Beta-carotene hydroxylase (crtZ).